A 454-amino-acid chain; its full sequence is Nuclear envelope integral membrane protein (454 aa).

The first 18 residues, 1–18 (MHSAGLLMLTVAGYFTSG), serve as a signal peptide directing secretion. Residue Asn38 is glycosylated (N-linked (GlcNAc...) asparagine). A run of 5 helical transmembrane segments spans residues 138-158 (IPLD…LFSA), 166-186 (VFYY…VVIY), 197-217 (MMYG…KQLA), 231-251 (VLGY…RIGP), and 280-300 (TSAV…PISW). Acidic residues predominate over residues 388-405 (SMDAAPEEESVEEPEEDK). Residues 388-454 (SMDAAPEEES…QEVDLRQVVQ (67 aa)) form a disordered region. Positions 414–424 (NSQFRYQQAAR) are enriched in polar residues. Positions 428 to 446 (PEPESESDDSEEEEFFEQE) are enriched in acidic residues.

It belongs to the NEMP family. As to quaternary structure, interacts with OTE. In terms of tissue distribution, expressed in both germline and somatic cells in the larval testis and prepupal ovary (at protein level). Also detected in the larval eye and larval wing disk (at protein level).

It localises to the nucleus inner membrane. Its function is as follows. Contributes to nuclear envelope stiffness in germ cells. Required for male and female fertility. The chain is Nuclear envelope integral membrane protein from Drosophila melanogaster (Fruit fly).